We begin with the raw amino-acid sequence, 379 residues long: Histidinol-phosphate aminotransferase (379 aa).

At K236 the chain carries N6-(pyridoxal phosphate)lysine.

This sequence belongs to the class-II pyridoxal-phosphate-dependent aminotransferase family. Histidinol-phosphate aminotransferase subfamily. Homodimer. It depends on pyridoxal 5'-phosphate as a cofactor.

It catalyses the reaction L-histidinol phosphate + 2-oxoglutarate = 3-(imidazol-4-yl)-2-oxopropyl phosphate + L-glutamate. The protein operates within amino-acid biosynthesis; L-histidine biosynthesis; L-histidine from 5-phospho-alpha-D-ribose 1-diphosphate: step 7/9. This chain is Histidinol-phosphate aminotransferase, found in Desulfotalea psychrophila (strain LSv54 / DSM 12343).